Consider the following 843-residue polypeptide: Receptor-like serine/threonine-protein kinase SD1-7 (843 aa).

The signal sequence occupies residues 1–31 (MRSVPNYHHSFFIFLILILFLAFSVSPNTLS). The 120-residue stretch at 32-151 (ATESLTISSN…NNRLLWQSFD (120 aa)) folds into the Bulb-type lectin domain. The Extracellular portion of the chain corresponds to 32 to 435 (ATESLTISSN…LEDKRIKNEK (404 aa)). N-linked (GlcNAc...) asparagine glycosylation is found at Asn-41, Asn-92, Asn-116, Asn-236, and Asn-251. Positions 286–322 (PKDLCDNYKVCGNFGYCDSNSLPNCYCIKGFKPVNEQ) constitute an EGF-like; atypical domain. 4 cysteine pairs are disulfide-bonded: Cys-290–Cys-302, Cys-296–Cys-310, Cys-372–Cys-397, and Cys-376–Cys-382. A PAN domain is found at 341-422 (CDGRDGFTRL…GGQDLYVRLA (82 aa)). Residue Asn-381 is glycosylated (N-linked (GlcNAc...) asparagine). The helical transmembrane segment at 436–456 (IIGSSIGVSILLLLSFVIFHF) threads the bilayer. Topologically, residues 457 to 843 (WKRKQKRSIT…QITLSVIDAR (387 aa)) are cytoplasmic. Residues 519–809 (FSNDNKLGQG…AIPQPKRPGF (291 aa)) form the Protein kinase domain. ATP is bound by residues 525 to 533 (LGQGGFGIV) and Lys-547. Ser-553 carries the phosphoserine modification. Residues 608–625 (TRSSNLNWQKRFDIINGI) form a caM-binding region. The Proton acceptor role is filled by Asp-644. A phosphoserine mark is found at Ser-648 and Ser-661. At Thr-678 the chain carries Phosphothreonine. The residue at position 820 (Ser-820) is a Phosphoserine.

Belongs to the protein kinase superfamily. Ser/Thr protein kinase family. In terms of assembly, interacts with PUB9, PUB13, PUB14 and PUB38. Post-translationally, autophosphorylated on serine and threonine residues. As to expression, mostly expressed in leaves, and, to a lower extent, in stems and flower buds.

Its subcellular location is the cell membrane. The enzyme catalyses L-seryl-[protein] + ATP = O-phospho-L-seryl-[protein] + ADP + H(+). It catalyses the reaction L-threonyl-[protein] + ATP = O-phospho-L-threonyl-[protein] + ADP + H(+). Its function is as follows. Involved in the regulation of cellular expansion and differentiation. Mediates subcellular relocalization of PUB9 from nucleus to plasma membrane in a protein-phosphorylation-dependent manner. May be involved in the abscisic acid-mediated signaling pathway, at least during germination. The chain is Receptor-like serine/threonine-protein kinase SD1-7 (SD17) from Arabidopsis thaliana (Mouse-ear cress).